The sequence spans 237 residues: 7-cyano-7-deazaguanine synthase (237 aa).

Residue Phe14 to Leu24 coordinates ATP. Cys202, Cys217, Cys220, and Cys223 together coordinate Zn(2+).

It belongs to the QueC family. Zn(2+) serves as cofactor.

The catalysed reaction is 7-carboxy-7-deazaguanine + NH4(+) + ATP = 7-cyano-7-deazaguanine + ADP + phosphate + H2O + H(+). It participates in purine metabolism; 7-cyano-7-deazaguanine biosynthesis. Its function is as follows. Catalyzes the ATP-dependent conversion of 7-carboxy-7-deazaguanine (CDG) to 7-cyano-7-deazaguanine (preQ(0)). The protein is 7-cyano-7-deazaguanine synthase of Rhodopseudomonas palustris (strain ATCC BAA-98 / CGA009).